A 426-amino-acid polypeptide reads, in one-letter code: MAYQDALSIRELAQQHNALFGDSVALIASENVMSPLAREVMISDLESRYAEGLPHHRYYQGNNFVDLIEDKTNELLSKLFKTEQTDPRPISGTNANSAAIYALAKPGDLVAVPALSGGGHISAAEFGILGMRGVRTISYPYDKNTMTVDPDEASKIIKREKPKVCLFGQSVFMFPVPLKEMKGAFDEVGCKVWYDGAHVLGLIAGRKFQDPLREGADIVTGSTHKTFPGPQHGVILGNTDSETWKSVRRAVFPGVLSNHHLNAMAALGITAAEELEFGEKYASDIIDNAKALAGELYSLGFKVLAEERGFTESHTMAVDVTQNGGGKYVAETLEASGIILNKNLLPWDDNKKSQNPSGIRIGVQEVTRTGMGKSEMKEIASLIYRAIVKKEEPSKIKEEVKDLKSSFRHVKYCYGDVDAYEYIKLI.

(6S)-5,6,7,8-tetrahydrofolate contacts are provided by residues Leu115 and 119-121 (GHI). Lys225 carries the post-translational modification N6-(pyridoxal phosphate)lysine.

The protein belongs to the SHMT family. As to quaternary structure, homodimer. The cofactor is pyridoxal 5'-phosphate.

Its subcellular location is the cytoplasm. It functions in the pathway amino-acid biosynthesis; glycine biosynthesis; glycine from L-serine: step 1/1. In terms of biological role, catalyzes the reversible interconversion of serine and glycine with a modified folate serving as the one-carbon carrier. Also exhibits a pteridine-independent aldolase activity toward beta-hydroxyamino acids, producing glycine and aldehydes, via a retro-aldol mechanism. This is Serine hydroxymethyltransferase from Thermoplasma volcanium (strain ATCC 51530 / DSM 4299 / JCM 9571 / NBRC 15438 / GSS1).